Consider the following 417-residue polypeptide: WAT1-related protein At3g02690, chloroplastic (417 aa).

Residues M1 to R68 constitute a chloroplast transit peptide. Residues V67–V92 form a disordered region. Over residues R68–V89 the composition is skewed to low complexity. The next 10 membrane-spanning stretches (helical) occupy residues F122–M142, F152–Y172, A183–A203, L213–F233, I237–V257, L269–V289, I301–I321, V339–Y359, L369–N389, and F392–F412. EamA domains follow at residues F133 to L255 and S283 to N411.

The protein belongs to the drug/metabolite transporter (DMT) superfamily. Plant drug/metabolite exporter (P-DME) (TC 2.A.7.4) family.

It is found in the plastid. Its subcellular location is the chloroplast membrane. The sequence is that of WAT1-related protein At3g02690, chloroplastic from Arabidopsis thaliana (Mouse-ear cress).